A 188-amino-acid polypeptide reads, in one-letter code: MKTIGVLAFQGGVIEHVKKIEELGAKPQLVKKKEDLKDLDGLILPGGESTTIGKFLIETGLKDQILNLIYEGMPVWGTCAGAILLSKNIKNQGSGVLPVLNIVIERNAYGSQLDSFKKEVFVPRFNIATECIFIRAPRIVEVAEGVEVLAELETPIAVLQKNILATTFHPELTSQNYWHSFFVENMVK.

Position 47 to 49 (47 to 49) interacts with L-glutamine; that stretch reads GES. The Nucleophile role is filled by Cys-79. L-glutamine-binding positions include Arg-106 and 134-135; that span reads IR. Active-site charge relay system residues include His-169 and Glu-171.

It belongs to the glutaminase PdxT/SNO family. As to quaternary structure, in the presence of PdxS, forms a dodecamer of heterodimers. Only shows activity in the heterodimer.

The catalysed reaction is aldehydo-D-ribose 5-phosphate + D-glyceraldehyde 3-phosphate + L-glutamine = pyridoxal 5'-phosphate + L-glutamate + phosphate + 3 H2O + H(+). It carries out the reaction L-glutamine + H2O = L-glutamate + NH4(+). Its pathway is cofactor biosynthesis; pyridoxal 5'-phosphate biosynthesis. Functionally, catalyzes the hydrolysis of glutamine to glutamate and ammonia as part of the biosynthesis of pyridoxal 5'-phosphate. The resulting ammonia molecule is channeled to the active site of PdxS. In Caldicellulosiruptor bescii (strain ATCC BAA-1888 / DSM 6725 / KCTC 15123 / Z-1320) (Anaerocellum thermophilum), this protein is Pyridoxal 5'-phosphate synthase subunit PdxT.